Consider the following 754-residue polypeptide: Photosystem I P700 chlorophyll a apoprotein A1 (754 aa).

The next 8 helical transmembrane spans lie at 72 to 95, 158 to 181, 197 to 221, 293 to 311, 351 to 374, 390 to 416, 438 to 460, and 535 to 553; these read IFSA…FHGA, LYCT…FHYH, MNHH…HVSL, TAHH…GHMY, WHAQ…HHMY, LSLF…IFMV, AIIS…LYIH, and FMVH…LILL. The [4Fe-4S] cluster site is built by cysteine 577 and cysteine 586. Helical transmembrane passes span 593–614 and 668–690; these read HVFL…HFSW and LSAY…MFLF. Residue histidine 679 participates in chlorophyll a' binding. Residues methionine 687 and tyrosine 695 each coordinate chlorophyll a. A phylloquinone-binding site is contributed by tryptophan 696. A helical membrane pass occupies residues 728 to 748; that stretch reads AVGVAHYLLGGIVTTWAFFLA.

The protein belongs to the PsaA/PsaB family. As to quaternary structure, the PsaA/B heterodimer binds the P700 chlorophyll special pair and subsequent electron acceptors. PSI consists of a core antenna complex that captures photons, and an electron transfer chain that converts photonic excitation into a charge separation. The cyanobacterial PSI reaction center is composed of one copy each of PsaA,B,C,D,E,F,I,J,K,L,M and X, and forms trimeric complexes. PSI electron transfer chain: 5 chlorophyll a, 1 chlorophyll a', 2 phylloquinones and 3 4Fe-4S clusters. PSI core antenna: 90 chlorophyll a, 22 carotenoids, 3 phospholipids and 1 galactolipid. P700 is a chlorophyll a/chlorophyll a' dimer, A0 is one or more chlorophyll a, A1 is one or both phylloquinones and FX is a shared 4Fe-4S iron-sulfur center. serves as cofactor.

The protein resides in the cellular thylakoid membrane. It carries out the reaction reduced [plastocyanin] + hnu + oxidized [2Fe-2S]-[ferredoxin] = oxidized [plastocyanin] + reduced [2Fe-2S]-[ferredoxin]. PsaA and PsaB bind P700, the primary electron donor of photosystem I (PSI), as well as the electron acceptors A0, A1 and FX. PSI is a plastocyanin/cytochrome c6-ferredoxin oxidoreductase, converting photonic excitation into a charge separation, which transfers an electron from the donor P700 chlorophyll pair to the spectroscopically characterized acceptors A0, A1, FX, FA and FB in turn. Oxidized P700 is reduced on the lumenal side of the thylakoid membrane by plastocyanin or cytochrome c6. This Rippkaea orientalis (strain PCC 8801 / RF-1) (Cyanothece sp. (strain PCC 8801)) protein is Photosystem I P700 chlorophyll a apoprotein A1.